Here is a 322-residue protein sequence, read N- to C-terminus: Pilin gene-inverting protein (322 aa).

Functionally, may be the site-specific invertase required for pilin gene inversion. Moraxella can express either a Q or I pilin; the inversion of 2 kb of DNA determines which pilin is expressed. This Moraxella lacunata protein is Pilin gene-inverting protein (piv).